The chain runs to 202 residues: HTH-type transcriptional regulator BetI 1 (202 aa).

An HTH tetR-type domain is found at 8-68 (PIRRRQLIQA…SAMRQILWDL (61 aa)). Residues 31–50 (TIARIAKRAGVSAGIISHYF) constitute a DNA-binding region (H-T-H motif).

It participates in amine and polyamine biosynthesis; betaine biosynthesis via choline pathway [regulation]. Functionally, repressor involved in the biosynthesis of the osmoprotectant glycine betaine. It represses transcription of the choline transporter BetT and the genes of BetAB involved in the synthesis of glycine betaine. The polypeptide is HTH-type transcriptional regulator BetI 1 (Chromohalobacter salexigens (strain ATCC BAA-138 / DSM 3043 / CIP 106854 / NCIMB 13768 / 1H11)).